We begin with the raw amino-acid sequence, 399 residues long: F-box/kelch-repeat protein At5g48980 (399 aa).

A compositionally biased stretch (polar residues) spans 1–11 (MADSQRLSTAS). The tract at residues 1 to 29 (MADSQRLSTASGVKDGQPPWKKKKLSNDT) is disordered. In terms of domain architecture, F-box spans 29-75 (TTSNPSLPYDVILIILARVSRSYYTNLSLVSKSFRSILTSPELYKTR). The stretch at 199 to 248 (IVYLPGSFESPDSLNCVEVYNTMTQTWKPVPPEKRMFKLENLEKKIYYKS) is one Kelch repeat.

This is F-box/kelch-repeat protein At5g48980 from Arabidopsis thaliana (Mouse-ear cress).